The chain runs to 1158 residues: MTLHAYLGRAGTGKSTKMLTEIKQKMKADPLGDPIILIAPTQSTFQLEQAFVNDPELNGSLRTEVLHFERLSHRIFQEVGSYSEQKLSKAATEMMIYNIVQEQQKYLKLYQSQAKYYGFSEKLTEQIQDFKKYAVTPEHLEHFIADKNMQTRTKNKLEDIALIYREFEQRIQNEFITGEDSLQYFIDCMPKSEWLKRADIYIDGFHNFSTIEYLIIKGLIKYAKSVTIILTTDGNHDQFSLFRKPSEVLRHIEEIANELNISIERQYFNQLYRFNNQDLKHLEQEFDVLQINRVACQGHINILESATMREEINEIARRIIVDIRDKQLRYQDIAILYRDESYAYLFDSILPLYNIPYNIDTKRSMTHHPVMEMIRSLIEVIQSNWQVNPMLRLLKTDVLTASYLKSAYLVDLLENFVLERGIYGKRWLDDELFNVEHFSKMGRKAHKLTEDERNTFEQVVKLKKDVIDKILHFEKQMSQAETVKDFATAFYESMEYFELPNQLMTERDELDLNGNHEKAEEIDQIWNGLIQILDDLVLVFGDEPMSMERFLEVFDIGLEQLEFVMIPQTLDQVSIGTMDLAKVDNKQHVFLVGMNDGTMPQPVTASSLITDEEKKYFEQQANVELSPTSDILQMDEAFVCYIAMTRARQDVTFSYRLMGSSGDDKEISPFLNQIQSLFNQLEITNIPQYHEVNPLSLMQHAKQTKITLFEALRAWLYDEIVADSWLDAYQVIRDSDHLNQGLDYLMSALTFDNETVKLGETLSKDLYGKEINASVSRFEGYQQCPFKHYASHGLKLNERTKYELQNFDLGDIFHSVLKYISERINGDFKQLDLKKIRQLTNEALEEILPKVQFNLLNSSAYYRYLSRRIGAIVETTLSALKYQGTYSKFMPKHFETSFRRKPRTNDELIAQTLTTTQGIPINIRGQIDRIDTYTKNDTSFVNIIDYKSSEGSATLDLTKVYYGMQMQMMTYMDIVLQNKQRLGLTDIVKPGGLLYFHVHEPRIKFKSWSDIDEDKLEQDLIKKFKLSGLVNADQTVIDALDIRLEPKFTSDIVPVGLNKDGSLSKRGSQVADEATIYKFIQHNKENFIETASNIMDGHTEVAPLKYKQKLPCAFCSYQSVCHVDGMIDSKRYRTVDETINPIEAIQNININDEFGGEQ.

Residues 1 to 275 enclose the UvrD-like helicase ATP-binding domain; the sequence is MTLHAYLGRA…QYFNQLYRFN (275 aa). 8 to 15 is a binding site for ATP; sequence GRAGTGKS. Residues 269–583 enclose the UvrD-like helicase C-terminal domain; the sequence is NQLYRFNNQD…SIGTMDLAKV (315 aa). [4Fe-4S] cluster is bound by residues Cys-784, Cys-1112, Cys-1115, and Cys-1121.

Belongs to the helicase family. AddB/RexB type 1 subfamily. In terms of assembly, heterodimer of AddA and AddB. Requires Mg(2+) as cofactor. The cofactor is [4Fe-4S] cluster.

Its function is as follows. The heterodimer acts as both an ATP-dependent DNA helicase and an ATP-dependent, dual-direction single-stranded exonuclease. Recognizes the chi site generating a DNA molecule suitable for the initiation of homologous recombination. The AddB subunit has 5' -&gt; 3' nuclease activity but not helicase activity. The protein is ATP-dependent helicase/deoxyribonuclease subunit B of Staphylococcus aureus (strain MSSA476).